Consider the following 317-residue polypeptide: Acetyl-coenzyme A carboxylase carboxyl transferase subunit alpha (317 aa).

Residues 37–291 enclose the CoA carboxyltransferase C-terminal domain; it reads KLQEKVDKLL…GNAIEDALDD (255 aa).

The protein belongs to the AccA family. In terms of assembly, acetyl-CoA carboxylase is a heterohexamer composed of biotin carboxyl carrier protein (AccB), biotin carboxylase (AccC) and two subunits each of ACCase subunit alpha (AccA) and ACCase subunit beta (AccD).

It is found in the cytoplasm. It catalyses the reaction N(6)-carboxybiotinyl-L-lysyl-[protein] + acetyl-CoA = N(6)-biotinyl-L-lysyl-[protein] + malonyl-CoA. Its pathway is lipid metabolism; malonyl-CoA biosynthesis; malonyl-CoA from acetyl-CoA: step 1/1. In terms of biological role, component of the acetyl coenzyme A carboxylase (ACC) complex. First, biotin carboxylase catalyzes the carboxylation of biotin on its carrier protein (BCCP) and then the CO(2) group is transferred by the carboxyltransferase to acetyl-CoA to form malonyl-CoA. The sequence is that of Acetyl-coenzyme A carboxylase carboxyl transferase subunit alpha from Rhodospirillum centenum (strain ATCC 51521 / SW).